Reading from the N-terminus, the 471-residue chain is Trigger factor (471 aa).

A PPIase FKBP-type domain is found at 169–264 (GDVAVVDFKG…LKEIKEKELP (96 aa)). Positions 443 to 471 (SLASQESEITAPETEAETIEVTAESTTGE) are disordered. The span at 448 to 471 (ESEITAPETEAETIEVTAESTTGE) shows a compositional bias: low complexity.

It belongs to the FKBP-type PPIase family. Tig subfamily.

Its subcellular location is the cytoplasm. It catalyses the reaction [protein]-peptidylproline (omega=180) = [protein]-peptidylproline (omega=0). In terms of biological role, involved in protein export. Acts as a chaperone by maintaining the newly synthesized protein in an open conformation. Functions as a peptidyl-prolyl cis-trans isomerase. The chain is Trigger factor from Trichormus variabilis (strain ATCC 29413 / PCC 7937) (Anabaena variabilis).